Consider the following 101-residue polypeptide: Small ribosomal subunit protein uS14 (101 aa).

This sequence belongs to the universal ribosomal protein uS14 family. In terms of assembly, part of the 30S ribosomal subunit. Contacts proteins S3 and S10.

In terms of biological role, binds 16S rRNA, required for the assembly of 30S particles and may also be responsible for determining the conformation of the 16S rRNA at the A site. This Shewanella amazonensis (strain ATCC BAA-1098 / SB2B) protein is Small ribosomal subunit protein uS14.